The following is a 143-amino-acid chain: Large ribosomal subunit protein uL15 (143 aa).

Basic residues-rich tracts occupy residues 1 to 13 and 23 to 38; these read MIRK…KMRG and KKHR…GNAG. A disordered region spans residues 1–38; sequence MIRKSKKITKMRGSRTCGYGEAKKHRGAGHRGGRGNAG.

It belongs to the universal ribosomal protein uL15 family. In terms of assembly, part of the 50S ribosomal subunit.

Its function is as follows. Binds to the 23S rRNA. This is Large ribosomal subunit protein uL15 from Methanococcus maripaludis (strain C5 / ATCC BAA-1333).